An 889-amino-acid chain; its full sequence is Mitochondrial intermediate peptidase (889 aa).

The N-terminal 30 residues, 1 to 30 (MASTSKNAQRAAASVAHSYHVCLARRMSRL), are a transit peptide targeting the mitochondrion. Residues 60-112 (SSSLAAQRVQRPTSAGPILTNPISDHEKDNDELRSLFDAPPTSSSANHLRSSG) form a disordered region. The span at 83–94 (SDHEKDNDELRS) shows a compositional bias: basic and acidic residues. Positions 100 to 112 (PTSSSANHLRSSG) are enriched in polar residues. H670 is a Zn(2+) binding site. E671 is an active-site residue. Zn(2+)-binding residues include H674 and H677.

This sequence belongs to the peptidase M3 family. The cofactor is Zn(2+).

The protein resides in the mitochondrion matrix. The catalysed reaction is Release of an N-terminal octapeptide as second stage of processing of some proteins imported into the mitochondrion.. Cleaves proteins, imported into the mitochondrion, to their mature size. While most mitochondrial precursor proteins are processed to the mature form in one step by mitochondrial processing peptidase (MPP), the sequential cleavage by MIP of an octapeptide after initial processing by MPP is a required step for a subgroup of nuclear-encoded precursor proteins destined for the matrix or the inner membrane. This Mycosarcoma maydis (Corn smut fungus) protein is Mitochondrial intermediate peptidase (OCT1).